We begin with the raw amino-acid sequence, 305 residues long: Probable branched-chain-amino-acid aminotransferase (305 aa).

At Lys-156 the chain carries N6-(pyridoxal phosphate)lysine.

It belongs to the class-IV pyridoxal-phosphate-dependent aminotransferase family. Requires pyridoxal 5'-phosphate as cofactor.

It catalyses the reaction L-leucine + 2-oxoglutarate = 4-methyl-2-oxopentanoate + L-glutamate. The catalysed reaction is L-isoleucine + 2-oxoglutarate = (S)-3-methyl-2-oxopentanoate + L-glutamate. It carries out the reaction L-valine + 2-oxoglutarate = 3-methyl-2-oxobutanoate + L-glutamate. Its pathway is amino-acid biosynthesis; L-isoleucine biosynthesis; L-isoleucine from 2-oxobutanoate: step 4/4. It participates in amino-acid biosynthesis; L-leucine biosynthesis; L-leucine from 3-methyl-2-oxobutanoate: step 4/4. It functions in the pathway amino-acid biosynthesis; L-valine biosynthesis; L-valine from pyruvate: step 4/4. Functionally, acts on leucine, isoleucine and valine. The protein is Probable branched-chain-amino-acid aminotransferase (ilvE) of Synechocystis sp. (strain ATCC 27184 / PCC 6803 / Kazusa).